We begin with the raw amino-acid sequence, 436 residues long: Serine--tRNA ligase (436 aa).

242 to 244 (TAE) contacts L-serine. Residue 273–275 (RSE) coordinates ATP. Glutamate 296 provides a ligand contact to L-serine. 360–363 (EISS) provides a ligand contact to ATP. Serine 395 is an L-serine binding site.

This sequence belongs to the class-II aminoacyl-tRNA synthetase family. Type-1 seryl-tRNA synthetase subfamily. In terms of assembly, homodimer. The tRNA molecule binds across the dimer.

It localises to the cytoplasm. It carries out the reaction tRNA(Ser) + L-serine + ATP = L-seryl-tRNA(Ser) + AMP + diphosphate + H(+). The catalysed reaction is tRNA(Sec) + L-serine + ATP = L-seryl-tRNA(Sec) + AMP + diphosphate + H(+). Its pathway is aminoacyl-tRNA biosynthesis; selenocysteinyl-tRNA(Sec) biosynthesis; L-seryl-tRNA(Sec) from L-serine and tRNA(Sec): step 1/1. Its function is as follows. Catalyzes the attachment of serine to tRNA(Ser). Is also able to aminoacylate tRNA(Sec) with serine, to form the misacylated tRNA L-seryl-tRNA(Sec), which will be further converted into selenocysteinyl-tRNA(Sec). The protein is Serine--tRNA ligase of Polynucleobacter asymbioticus (strain DSM 18221 / CIP 109841 / QLW-P1DMWA-1) (Polynucleobacter necessarius subsp. asymbioticus).